The chain runs to 375 residues: Serine protease 23 (375 aa).

Residues 1–23 (MAGTPGHPIFLLLLLRAIGQVSP) form the signal peptide. The N-linked (GlcNAc...) asparagine glycan is linked to Asn93. Residues Cys153 and Cys169 are joined by a disulfide bond. His168 functions as the Charge relay system in the catalytic mechanism. Asn199 is a glycosylation site (N-linked (GlcNAc...) asparagine). Active-site charge relay system residues include Asp232 and Ser308.

Belongs to the peptidase S1 family.

The protein localises to the secreted. The chain is Serine protease 23 (PRSS23) from Bos taurus (Bovine).